A 205-amino-acid polypeptide reads, in one-letter code: Probable thymidylate kinase (205 aa).

Residue 7–14 (GIDGAGKS) participates in ATP binding.

It belongs to the thymidylate kinase family.

The catalysed reaction is dTMP + ATP = dTDP + ADP. This is Probable thymidylate kinase from Thermococcus kodakarensis (strain ATCC BAA-918 / JCM 12380 / KOD1) (Pyrococcus kodakaraensis (strain KOD1)).